A 256-amino-acid polypeptide reads, in one-letter code: Ribosomal RNA small subunit methyltransferase J (256 aa).

Residues R104–D105, E120–R121, S156–S157, and D174 each bind S-adenosyl-L-methionine.

It belongs to the methyltransferase superfamily. RsmJ family.

It localises to the cytoplasm. The enzyme catalyses guanosine(1516) in 16S rRNA + S-adenosyl-L-methionine = N(2)-methylguanosine(1516) in 16S rRNA + S-adenosyl-L-homocysteine + H(+). Functionally, specifically methylates the guanosine in position 1516 of 16S rRNA. This Yersinia pseudotuberculosis serotype O:1b (strain IP 31758) protein is Ribosomal RNA small subunit methyltransferase J.